The chain runs to 161 residues: Globin CTT-VIIB-3 (161 aa).

Positions 1–16 are cleaved as a signal peptide; it reads MKFFAVLALCIVGAIA. The 144-residue stretch at 18–161 folds into the Globin domain; the sequence is PLTADEASLV…NTYAIVVPRL (144 aa). Heme b contacts are provided by histidine 76 and histidine 111.

It belongs to the globin family. In terms of assembly, homodimer.

The polypeptide is Globin CTT-VIIB-3 (CTT-7B3) (Chironomus thummi thummi (Midge)).